The following is a 69-amino-acid chain: Probable rubredoxin HupI (69 aa).

Residues 16 to 67 (VTRLECGICWTVYDPADGDDVAQIAPGTPFAALPEEWHCPNCDAPKSKFMAI) form the Rubredoxin-like domain. 4 residues coordinate Fe cation: Cys-21, Cys-24, Cys-54, and Cys-57.

Belongs to the rubredoxin family. It depends on Fe(3+) as a cofactor.

Its function is as follows. Could be an electron transport intermediate in hydrogen oxidation. The protein is Probable rubredoxin HupI (hupI) of Bradyrhizobium diazoefficiens (strain JCM 10833 / BCRC 13528 / IAM 13628 / NBRC 14792 / USDA 110).